A 116-amino-acid polypeptide reads, in one-letter code: uncharacterized protein (116 aa).

Residues 52–72 traverse the membrane as a helical segment; it reads VFCSANSVPLYLLLLTSALHF.

Its subcellular location is the mitochondrion membrane. This is an uncharacterized protein from Arabidopsis thaliana (Mouse-ear cress).